Here is a 308-residue protein sequence, read N- to C-terminus: Bifunctional protein FolD (308 aa).

170–172 (GKG) contacts NADP(+).

This sequence belongs to the tetrahydrofolate dehydrogenase/cyclohydrolase family. As to quaternary structure, homodimer.

The enzyme catalyses (6R)-5,10-methylene-5,6,7,8-tetrahydrofolate + NADP(+) = (6R)-5,10-methenyltetrahydrofolate + NADPH. It carries out the reaction (6R)-5,10-methenyltetrahydrofolate + H2O = (6R)-10-formyltetrahydrofolate + H(+). The protein operates within one-carbon metabolism; tetrahydrofolate interconversion. Its function is as follows. Catalyzes the oxidation of 5,10-methylenetetrahydrofolate to 5,10-methenyltetrahydrofolate and then the hydrolysis of 5,10-methenyltetrahydrofolate to 10-formyltetrahydrofolate. This Pyrobaculum calidifontis (strain DSM 21063 / JCM 11548 / VA1) protein is Bifunctional protein FolD.